The chain runs to 160 residues: Putative flagellin YvzB (160 aa).

The protein belongs to the bacterial flagellin family. In terms of assembly, interacts with FliW.

Its subcellular location is the bacterial flagellum. The protein is Putative flagellin YvzB (yvzB) of Bacillus subtilis (strain 168).